Consider the following 490-residue polypeptide: Cytochrome P450 2C19 (490 aa).

Heme is bound at residue cysteine 435.

Belongs to the cytochrome P450 family. The cofactor is heme.

Its subcellular location is the endoplasmic reticulum membrane. The protein resides in the microsome membrane. The catalysed reaction is an organic molecule + reduced [NADPH--hemoprotein reductase] + O2 = an alcohol + oxidized [NADPH--hemoprotein reductase] + H2O + H(+). It catalyses the reaction (5Z,8Z,11Z)-eicosatrienoate + reduced [NADPH--hemoprotein reductase] + O2 = 19-hydroxy-(5Z,8Z,11Z)-eicosatrienoate + oxidized [NADPH--hemoprotein reductase] + H2O + H(+). The enzyme catalyses (5Z,8Z,11Z,14Z)-eicosatetraenoate + reduced [NADPH--hemoprotein reductase] + O2 = 19-hydroxy-(5Z,8Z,11Z,14Z)-eicosatetraenoate + oxidized [NADPH--hemoprotein reductase] + H2O + H(+). It carries out the reaction (5Z,8Z,11Z,14Z,17Z)-eicosapentaenoate + reduced [NADPH--hemoprotein reductase] + O2 = 19-hydroxy-(5Z,8Z,11Z,14Z,17Z)-eicosapentaenoate + oxidized [NADPH--hemoprotein reductase] + H2O + H(+). The catalysed reaction is (4Z,7Z,10Z,13Z,16Z,19Z)-docosahexaenoate + reduced [NADPH--hemoprotein reductase] + O2 = 21-hydroxy-(4Z,7Z,10Z,13Z,16Z,19Z)-docosahexaenoate + oxidized [NADPH--hemoprotein reductase] + H2O + H(+). It catalyses the reaction (5Z,8Z,11Z,14Z)-eicosatetraenoate + reduced [NADPH--hemoprotein reductase] + O2 = (8R,9S)-epoxy-(5Z,11Z,14Z)-eicosatrienoate + oxidized [NADPH--hemoprotein reductase] + H2O + H(+). The enzyme catalyses (5Z,8Z,11Z,14Z)-eicosatetraenoate + reduced [NADPH--hemoprotein reductase] + O2 = (11R,12S)-epoxy-(5Z,8Z,14Z)-eicosatrienoate + oxidized [NADPH--hemoprotein reductase] + H2O + H(+). It carries out the reaction (5Z,8Z,11Z,14Z)-eicosatetraenoate + reduced [NADPH--hemoprotein reductase] + O2 = (11S,12R)-epoxy-(5Z,8Z,14Z)-eicosatrienoate + oxidized [NADPH--hemoprotein reductase] + H2O + H(+). The catalysed reaction is (5Z,8Z,11Z,14Z)-eicosatetraenoate + reduced [NADPH--hemoprotein reductase] + O2 = (14R,15S)-epoxy-(5Z,8Z,11Z)-eicosatrienoate + oxidized [NADPH--hemoprotein reductase] + H2O + H(+). It catalyses the reaction (5Z,8Z,11Z,14Z,17Z)-eicosapentaenoate + reduced [NADPH--hemoprotein reductase] + O2 = (17R,18S)-epoxy-(5Z,8Z,11Z,14Z)-eicosatetraenoate + oxidized [NADPH--hemoprotein reductase] + H2O + H(+). The enzyme catalyses (4Z,7Z,10Z,13Z,16Z,19Z)-docosahexaenoate + reduced [NADPH--hemoprotein reductase] + O2 = (19R,20S)-epoxy-(4Z,7Z,10Z,13Z,16Z)-docosapentaenoate + oxidized [NADPH--hemoprotein reductase] + H2O + H(+). It carries out the reaction (4Z,7Z,10Z,13Z,16Z,19Z)-docosahexaenoate + reduced [NADPH--hemoprotein reductase] + O2 = (19S,20R)-epoxy-(4Z,7Z,10Z,13Z,16Z)-docosapentaenoate + oxidized [NADPH--hemoprotein reductase] + H2O + H(+). The catalysed reaction is (4R)-limonene + reduced [NADPH--hemoprotein reductase] + O2 = (1R,5S)-carveol + oxidized [NADPH--hemoprotein reductase] + H2O + H(+). It catalyses the reaction (4S)-limonene + reduced [NADPH--hemoprotein reductase] + O2 = (1S,5R)-carveol + oxidized [NADPH--hemoprotein reductase] + H2O + H(+). The enzyme catalyses (4S)-limonene + reduced [NADPH--hemoprotein reductase] + O2 = (4S)-perillyl alcohol + oxidized [NADPH--hemoprotein reductase] + H2O + H(+). It carries out the reaction fenbendazole + reduced [NADPH--hemoprotein reductase] + O2 = 4'-hydroxyfenbendazole + oxidized [NADPH--hemoprotein reductase] + H2O + H(+). The protein operates within lipid metabolism; fatty acid metabolism. Its pathway is terpene metabolism; (4R)-limonene degradation. A cytochrome P450 monooxygenase involved in the metabolism of polyunsaturated fatty acids (PUFA). Mechanistically, uses molecular oxygen inserting one oxygen atom into a substrate, and reducing the second into a water molecule, with two electrons provided by NADPH via cytochrome P450 reductase (NADPH--hemoprotein reductase). Catalyzes the hydroxylation of carbon-hydrogen bonds. Hydroxylates PUFA specifically at the omega-1 position. Catalyzes the epoxidation of double bonds of PUFA. Also metabolizes plant monoterpenes such as limonene. Oxygenates (R)- and (S)-limonene to produce carveol and perillyl alcohol. Responsible for the metabolism of a number of therapeutic agents such as the anticonvulsant drug S-mephenytoin, omeprazole, proguanil, certain barbiturates, diazepam, propranolol, citalopram and imipramine. Hydroxylates fenbendazole at the 4' position. This chain is Cytochrome P450 2C19 (CYP2C19), found in Homo sapiens (Human).